Consider the following 1749-residue polypeptide: E3 ubiquitin-protein ligase UBR1 (1749 aa).

The residue at position 2 (A2) is an N-acetylalanine. At T21 the chain carries Phosphothreonine. The UBR-type zinc finger occupies 97 to 168; it reads QLCGRVFKSG…TGPFCVNHEP (72 aa). Residues C99, C112, C115, C124, C127, H133, and H136 each contribute to the Zn(2+) site. F148 contacts a peptide. C149 lines the Zn(2+) pocket. An a peptide-binding site is contributed by D150. Residue C151 participates in Zn(2+) binding. D153 is a binding site for a peptide. Zn(2+) contacts are provided by C163 and H166. Residues 842–868 are disordered; the sequence is QHSKAEHMQKKRRKQENKDEALPPPPP. The interval 1019 to 1054 is UBC2-binding region (U2BR); the sequence is RKRKAEAARLHRQKIMAQMSALQKNFIETHKLMYDN. Zn(2+) is bound by residues C1098, C1101, C1159, H1161, H1164, and C1167. An RING-type; atypical zinc finger spans residues 1098–1201; that stretch reads CILCQEEQEV…SGEYLCPLCK (104 aa). Residue S1179 is modified to Phosphoserine. Residues C1197, C1200, C1627, C1630, and C1653 each coordinate Zn(2+).

It belongs to the E3 ubiquitin-protein ligase UBR1-like family. Interacts with RECQL4. Broadly expressed, with highest levels in skeletal muscle, kidney and pancreas. Present in acinar cells of the pancreas (at protein level).

It localises to the cytoplasm. The protein localises to the cytosol. It carries out the reaction S-ubiquitinyl-[E2 ubiquitin-conjugating enzyme]-L-cysteine + [acceptor protein]-L-lysine = [E2 ubiquitin-conjugating enzyme]-L-cysteine + N(6)-ubiquitinyl-[acceptor protein]-L-lysine.. Its pathway is protein modification; protein ubiquitination. With respect to regulation, inhibited by the small-molecule compound RF-C11, which bears two heterovalent ligands: RF-C11 inhibits activity toward both type-1 and type-2 N-degrons. In terms of biological role, E3 ubiquitin-protein ligase which is a component of the N-end rule pathway. Recognizes and binds proteins bearing specific N-terminal residues that are destabilizing according to the N-end rule, leading to their ubiquitination and subsequent degradation. Recognizes both type-1 and type-2 N-degrons, containing positively charged amino acids (Arg, Lys and His) and bulky and hydrophobic amino acids, respectively. Does not ubiquitinate proteins that are acetylated at the N-terminus. In contrast, it strongly binds methylated N-degrons. Binds leucine and is a negative regulator of the leucine-mTOR signaling pathway, thereby controlling cell growth. The sequence is that of E3 ubiquitin-protein ligase UBR1 from Homo sapiens (Human).